The chain runs to 307 residues: Small ribosomal subunit biogenesis GTPase RsgA (307 aa).

A CP-type G domain is found at 80–237; it reads KADLRQTIVS…IVDTPGIKEF (158 aa). Residues 129-132 and 180-188 each bind GTP; these read NKID and GQSGVGKSS. Positions 261, 266, 268, and 274 each coordinate Zn(2+).

This sequence belongs to the TRAFAC class YlqF/YawG GTPase family. RsgA subfamily. In terms of assembly, monomer. Associates with 30S ribosomal subunit, binds 16S rRNA. Zn(2+) serves as cofactor.

It is found in the cytoplasm. Functionally, one of several proteins that assist in the late maturation steps of the functional core of the 30S ribosomal subunit. Helps release RbfA from mature subunits. May play a role in the assembly of ribosomal proteins into the subunit. Circularly permuted GTPase that catalyzes slow GTP hydrolysis, GTPase activity is stimulated by the 30S ribosomal subunit. The sequence is that of Small ribosomal subunit biogenesis GTPase RsgA from Borreliella burgdorferi (strain ATCC 35210 / DSM 4680 / CIP 102532 / B31) (Borrelia burgdorferi).